We begin with the raw amino-acid sequence, 77 residues long: EMBRYO SURROUNDING FACTOR 1-like protein 9 (77 aa).

A signal peptide spans 1 to 22 (MSSSRFLILCIILISFFPLHEC). 4 disulfide bridges follow: Cys-38–Cys-54, Cys-43–Cys-75, Cys-52–Cys-71, and Cys-55–Cys-64.

This sequence belongs to the MEG family. In terms of tissue distribution, expressed in flowers.

This chain is EMBRYO SURROUNDING FACTOR 1-like protein 9 (ESFL9), found in Arabidopsis thaliana (Mouse-ear cress).